Here is a 290-residue protein sequence, read N- to C-terminus: 7-methylguanosine phosphate-specific 5'-nucleotidase B (290 aa).

Catalysis depends on D39, which acts as the Nucleophile. Residues D39 and D41 each contribute to the Mg(2+) site. D41 serves as the catalytic Proton donor. E86 contacts CMP. Residue E86 coordinates N(7)-methyl-GMP. Residues 154-155 (SA) and K203 each bind substrate. D228 is a Mg(2+) binding site.

It belongs to the pyrimidine 5'-nucleotidase family. As to quaternary structure, monomer.

It localises to the cytoplasm. It catalyses the reaction N(7)-methyl-GMP + H2O = N(7)-methylguanosine + phosphate. It carries out the reaction CMP + H2O = cytidine + phosphate. The catalysed reaction is a ribonucleoside 5'-phosphate + H2O = a ribonucleoside + phosphate. In terms of biological role, specifically hydrolyzes 7-methylguanosine monophosphate (m(7)GMP) to 7-methylguanosine and inorganic phosphate. The specific activity for m(7)GMP may protect cells against undesired salvage of m(7)GMP and its incorporation into nucleic acids. Also has weak activity for CMP. UMP and purine nucleotides are poor substrates. The chain is 7-methylguanosine phosphate-specific 5'-nucleotidase B (Nt5c3b-b) from Xenopus laevis (African clawed frog).